Here is a 430-residue protein sequence, read N- to C-terminus: Small ribosomal subunit protein uS5m (430 aa).

Positions 108–128 (AGARKGRGKRTKRKRRKDLNR) are disordered. A compositionally biased stretch (basic residues) spans 111-125 (RKGRGKRTKRKRRKD). In terms of domain architecture, S5 DRBM spans 218 to 282 (FDTRILEVRN…NRAVHYLHYI (65 aa)).

The protein belongs to the universal ribosomal protein uS5 family. Component of the mitochondrial ribosome small subunit (28S) which comprises a 12S rRNA and about 30 distinct proteins.

It localises to the mitochondrion. The chain is Small ribosomal subunit protein uS5m (MRPS5) from Bos taurus (Bovine).